The primary structure comprises 507 residues: Pyruvate kinase (507 aa).

Arg-50 is a substrate binding site. K(+)-binding residues include Asn-52, Ser-54, Asp-84, and Thr-85. 52 to 55 (NFSH) is an ATP binding site. ATP contacts are provided by Arg-91 and Lys-177. Residue Glu-242 participates in Mg(2+) binding. Substrate is bound by residues Gly-265, Asp-266, and Thr-298. Asp-266 contacts Mg(2+).

This sequence belongs to the pyruvate kinase family. Homotetramer. Mg(2+) is required as a cofactor. The cofactor is K(+).

The enzyme catalyses pyruvate + ATP = phosphoenolpyruvate + ADP + H(+). It participates in carbohydrate degradation; glycolysis; pyruvate from D-glyceraldehyde 3-phosphate: step 5/5. This is Pyruvate kinase (pyk) from Dictyostelium discoideum (Social amoeba).